The chain runs to 62 residues: Photosystem II reaction center protein Z (62 aa).

2 helical membrane passes run 8-28 (TLFALILFSFVLVVGVPVVFA) and 41-61 (LSGLGLWILLVFVVGILNSFV).

It belongs to the PsbZ family. PSII is composed of 1 copy each of membrane proteins PsbA, PsbB, PsbC, PsbD, PsbE, PsbF, PsbH, PsbI, PsbJ, PsbK, PsbL, PsbM, PsbT, PsbY, PsbZ, Psb30/Ycf12, at least 3 peripheral proteins of the oxygen-evolving complex and a large number of cofactors. It forms dimeric complexes.

Its subcellular location is the plastid. It is found in the chloroplast thylakoid membrane. Its function is as follows. May control the interaction of photosystem II (PSII) cores with the light-harvesting antenna, regulates electron flow through the 2 photosystem reaction centers. PSII is a light-driven water plastoquinone oxidoreductase, using light energy to abstract electrons from H(2)O, generating a proton gradient subsequently used for ATP formation. This is Photosystem II reaction center protein Z from Stigeoclonium helveticum (Green alga).